A 404-amino-acid polypeptide reads, in one-letter code: Cysteine desulfurase IscS (404 aa).

Pyridoxal 5'-phosphate contacts are provided by residues 75 to 76 (AT), Asn-155, Gln-183, and 203 to 205 (SGH). The residue at position 206 (Lys-206) is an N6-(pyridoxal phosphate)lysine. Thr-243 lines the pyridoxal 5'-phosphate pocket. Cys-328 functions as the Cysteine persulfide intermediate in the catalytic mechanism. Cys-328 is a binding site for [2Fe-2S] cluster.

The protein belongs to the class-V pyridoxal-phosphate-dependent aminotransferase family. NifS/IscS subfamily. As to quaternary structure, homodimer. Forms a heterotetramer with IscU, interacts with other sulfur acceptors. Pyridoxal 5'-phosphate serves as cofactor.

Its subcellular location is the cytoplasm. It catalyses the reaction (sulfur carrier)-H + L-cysteine = (sulfur carrier)-SH + L-alanine. The protein operates within cofactor biosynthesis; iron-sulfur cluster biosynthesis. Master enzyme that delivers sulfur to a number of partners involved in Fe-S cluster assembly, tRNA modification or cofactor biosynthesis. Catalyzes the removal of elemental sulfur and selenium atoms from cysteine and selenocysteine to produce alanine. Functions as a sulfur delivery protein for Fe-S cluster synthesis onto IscU, an Fe-S scaffold assembly protein, as well as other S acceptor proteins. Also functions as a selenium delivery protein in the pathway for the biosynthesis of selenophosphate. The chain is Cysteine desulfurase IscS from Salmonella typhi.